A 278-amino-acid polypeptide reads, in one-letter code: 4-deoxy-L-threo-5-hexosulose-uronate ketol-isomerase (278 aa).

4 residues coordinate Zn(2+): His-196, His-198, Glu-203, and His-245.

This sequence belongs to the KduI family. Requires Zn(2+) as cofactor.

The enzyme catalyses 5-dehydro-4-deoxy-D-glucuronate = 3-deoxy-D-glycero-2,5-hexodiulosonate. The protein operates within glycan metabolism; pectin degradation; 2-dehydro-3-deoxy-D-gluconate from pectin: step 4/5. Its function is as follows. Catalyzes the isomerization of 5-dehydro-4-deoxy-D-glucuronate to 3-deoxy-D-glycero-2,5-hexodiulosonate. This is 4-deoxy-L-threo-5-hexosulose-uronate ketol-isomerase from Yersinia pseudotuberculosis serotype O:1b (strain IP 31758).